We begin with the raw amino-acid sequence, 453 residues long: Chromosomal replication initiator protein DnaA (453 aa).

The domain I, interacts with DnaA modulators stretch occupies residues 1 to 73; it reads MELSPQDLWT…ADVVEEILGY (73 aa). Residues 73–110 form a domain II region; the sequence is YSIDIQLTSTQGENIAIVGETQVSAYYPTLSGEHPKPI. The segment at 111–327 is domain III, AAA+ region; the sequence is KLNPKYTFSR…GALIRAITYI (217 aa). 4 residues coordinate ATP: glycine 155, glycine 157, lysine 158, and threonine 159. The tract at residues 328 to 453 is domain IV, binds dsDNA; that stretch reads SISGLSMTVE…HLASRTQKTT (126 aa).

Belongs to the DnaA family. As to quaternary structure, oligomerizes as a right-handed, spiral filament on DNA at oriC.

Its subcellular location is the cytoplasm. In terms of biological role, plays an essential role in the initiation and regulation of chromosomal replication. ATP-DnaA binds to the origin of replication (oriC) to initiate formation of the DNA replication initiation complex once per cell cycle. Binds the DnaA box (a 9 base pair repeat at the origin) and separates the double-stranded (ds)DNA. Forms a right-handed helical filament on oriC DNA; dsDNA binds to the exterior of the filament while single-stranded (ss)DNA is stabiized in the filament's interior. The ATP-DnaA-oriC complex binds and stabilizes one strand of the AT-rich DNA unwinding element (DUE), permitting loading of DNA polymerase. After initiation quickly degrades to an ADP-DnaA complex that is not apt for DNA replication. Binds acidic phospholipids. The sequence is that of Chromosomal replication initiator protein DnaA from Gloeothece citriformis (strain PCC 7424) (Cyanothece sp. (strain PCC 7424)).